The primary structure comprises 107 residues: uncharacterized protein (107 aa).

Residues 12–32 (IILNIFLALLLVYFIFHCIYG) traverse the membrane as a helical segment.

It is found in the membrane. This is an uncharacterized protein from Rickettsia prowazekii (strain Madrid E).